The sequence spans 477 residues: PTS system glucose-specific EIICB component (477 aa).

Residues 1–14 lie on the Cytoplasmic side of the membrane; the sequence is MFKNAFANLQKVGK. Residues 1–388 enclose the PTS EIIC type-1 domain; the sequence is MFKNAFANLQ…LDLKTPGRED (388 aa). Residues 15–35 form a helical membrane-spanning segment; the sequence is SLMLPVSVLPIAGILLGVGSA. Over 36–50 the chain is Periplasmic; the sequence is NFSWLPAVVSHVMAE. Residues 51–71 form a helical membrane-spanning segment; sequence AGGSVFANMPLIFAIGVALGF. Residues 72–79 lie on the Cytoplasmic side of the membrane; it reads TNNDGVSA. A helical transmembrane segment spans residues 80–100; that stretch reads LAAVVAYGIMVKTMAVVAPLV. At 101 to 111 the chain is on the periplasmic side; it reads LHLPAEEIAAK. The chain crosses the membrane as a helical span at residues 112 to 132; the sequence is HLADTGVLGGIISGAIAAYMF. Topologically, residues 133–151 are cytoplasmic; the sequence is NRFYRIKLPEYLGFFAGKR. A helical membrane pass occupies residues 152–172; sequence FVPIISGLAAIFTGVVLSFVW. The Periplasmic segment spans residues 173 to 190; that stretch reads PPIGTAIQAFSQWAAYQN. Residues 191-211 traverse the membrane as a helical segment; the sequence is PVVAFGIYGFIERCLVPFGLH. Over 212–248 the chain is Cytoplasmic; it reads HIWNVPFQMQIGEYTNAAGQVFHGDIPRYMAGDPTAG. A helical membrane pass occupies residues 249 to 269; it reads MLSGGFLFKMYGLPAAAIAIW. Over 270–279 the chain is Periplasmic; the sequence is HSAKPENRAK. A helical membrane pass occupies residues 280–300; sequence VGGIMISAALTSFLTGITEPI. The Cytoplasmic segment spans residues 301-309; it reads EFSFMFVAP. A helical membrane pass occupies residues 310 to 330; that stretch reads ILYIIHAILAGLAFPICILLG. The Periplasmic segment spans residues 331–355; the sequence is MRDGTSFSHGLIDFIVLSGNSSKLW. Residues 356-376 traverse the membrane as a helical segment; that stretch reads LFPIVGAGYAIVYYTVFRVLI. Topologically, residues 377 to 477 are cytoplasmic; the sequence is KALDLKTPGR…TEMDEYIRNS (101 aa). The PTS EIIB type-1 domain maps to 399–477; sequence SEMAPALVAA…TEMDEYIRNS (79 aa). The Phosphocysteine intermediate; for EIIB activity role is filled by Cys-421. The residue at position 421 (Cys-421) is a Phosphocysteine.

The protein localises to the cell inner membrane. It carries out the reaction N(pros)-phospho-L-histidyl-[protein] + D-glucose(out) = D-glucose 6-phosphate(in) + L-histidyl-[protein]. Its function is as follows. The phosphoenolpyruvate-dependent sugar phosphotransferase system (sugar PTS), a major carbohydrate active transport system, catalyzes the phosphorylation of incoming sugar substrates concomitantly with their translocation across the cell membrane. The enzyme II complex composed of PtsG and Crr is involved in glucose transport. Also functions as a chemoreceptor monitoring the environment for changes in sugar concentration. It can also phosphorylate mannose, methyl alpha-glucoside and 2-deoxy-glucose. The sequence is that of PTS system glucose-specific EIICB component (ptsG) from Salmonella typhimurium (strain LT2 / SGSC1412 / ATCC 700720).